The primary structure comprises 396 residues: Protein nipi-4 (396 aa).

The Extracellular portion of the chain corresponds to 1–20; that stretch reads MELDHTPPPSVLNDNCSASY. A glycan (N-linked (GlcNAc...) asparagine) is linked at asparagine 15. Residues 21 to 41 traverse the membrane as a helical segment; the sequence is MTPYATVIAMSGLYLLAIFYF. Residues 42-396 are Cytoplasmic-facing; the sequence is CKKSKKMCQP…EHHCQSVIHY (355 aa). Positions 81-368 constitute a Protein kinase domain; sequence EVDDFQIGQT…SRLSELHHIV (288 aa). ATP is bound by residues 87–95 and lysine 111; that span reads IGQTADGFI.

This sequence belongs to the protein kinase superfamily. Tyr protein kinase family. As to expression, expressed in the epidermis of larvae and adults and in vulval and rectal cells.

The protein localises to the membrane. Its function is as follows. Pseudokinase which plays a role in resistance to fungal infection by promoting expression of antimicrobial peptides (nlp-29, nlp-31, nlp-34, cnc-1, cnc-2 and cnc-4) in the epidermis. In addition, up-regulates nlp-29 expression upon physical wounding and in response to phorbol ester PMA treatment. This is Protein nipi-4 from Caenorhabditis elegans.